The primary structure comprises 570 residues: Glutamate--tRNA ligase (570 aa).

Positions 107–117 (PNPDFVLHLGS) match the 'HIGH' region motif.

Belongs to the class-I aminoacyl-tRNA synthetase family. Glutamate--tRNA ligase type 2 subfamily.

Its subcellular location is the cytoplasm. It catalyses the reaction tRNA(Glu) + L-glutamate + ATP = L-glutamyl-tRNA(Glu) + AMP + diphosphate. In terms of biological role, catalyzes the attachment of glutamate to tRNA(Glu) in a two-step reaction: glutamate is first activated by ATP to form Glu-AMP and then transferred to the acceptor end of tRNA(Glu). In Pyrobaculum aerophilum (strain ATCC 51768 / DSM 7523 / JCM 9630 / CIP 104966 / NBRC 100827 / IM2), this protein is Glutamate--tRNA ligase.